The sequence spans 586 residues: CTP synthase (586 aa).

Residues 1–278 are amidoligase domain; the sequence is MRKHPQTATK…DAFVVRRLNL (278 aa). Residue S20 coordinates CTP. S20 contributes to the UTP binding site. Residues 21-26 and D78 contribute to the ATP site; that span reads SLGKGL. Residues D78 and E152 each coordinate Mg(2+). CTP is bound by residues 159–161, 199–204, and K235; these read DIE and KTKPTQ. UTP contacts are provided by residues 199–204 and K235; that span reads KTKPTQ. The region spanning 303–551 is the Glutamine amidotransferase type-1 domain; sequence RIALVGKYVE…VGAAIDYKAG (249 aa). G366 is an L-glutamine binding site. C393 functions as the Nucleophile; for glutamine hydrolysis in the catalytic mechanism. L-glutamine is bound by residues 394–397, E416, and R477; that span reads LGLQ. Residues H524 and E526 contribute to the active site. The interval 560–586 is disordered; sequence EIPEHTPNGSSHRDGVGQPLPEPASRG.

The protein belongs to the CTP synthase family. Homotetramer.

The catalysed reaction is UTP + L-glutamine + ATP + H2O = CTP + L-glutamate + ADP + phosphate + 2 H(+). The enzyme catalyses L-glutamine + H2O = L-glutamate + NH4(+). It carries out the reaction UTP + NH4(+) + ATP = CTP + ADP + phosphate + 2 H(+). It participates in pyrimidine metabolism; CTP biosynthesis via de novo pathway; CTP from UDP: step 2/2. With respect to regulation, allosterically activated by GTP, when glutamine is the substrate; GTP has no effect on the reaction when ammonia is the substrate. The allosteric effector GTP functions by stabilizing the protein conformation that binds the tetrahedral intermediate(s) formed during glutamine hydrolysis. Inhibited by the product CTP, via allosteric rather than competitive inhibition. In terms of biological role, catalyzes the ATP-dependent amination of UTP to CTP with either L-glutamine or ammonia as the source of nitrogen. Regulates intracellular CTP levels through interactions with the four ribonucleotide triphosphates. This Mycobacterium tuberculosis (strain CDC 1551 / Oshkosh) protein is CTP synthase.